The chain runs to 23 residues: Toxin Acra2 (23 aa).

The 22-residue stretch at 2 to 23 (KDGYIVDSNGCAPECFPTNXGC) folds into the LCN-type CS-alpha/beta domain.

Post-translationally, contains 4 disulfide bonds. As to expression, expressed by the venom gland.

It is found in the secreted. In terms of biological role, excitatory insect toxins induce a spastic paralysis. They bind voltage-independently at site-4 of sodium channels (Nav) and shift the voltage of activation toward more negative potentials thereby affecting sodium channel activation and promoting spontaneous and repetitive firing. Is lethal to mice. Is about 1% of the total protein in the venom. This chain is Toxin Acra2, found in Androctonus crassicauda (Arabian fat-tailed scorpion).